Reading from the N-terminus, the 325-residue chain is Odorant receptor 131-2 (325 aa).

Residues 1 to 22 are Extracellular-facing; sequence MNSTSNSSLGNTFISKTLKEKS. N-linked (GlcNAc...) asparagine glycans are attached at residues asparagine 2 and asparagine 6. The chain crosses the membrane as a helical span at residues 23–43; sequence LTVQVLVGILLYVNGLMIFTF. Over 44–54 the chain is Cytoplasmic; the sequence is LKKETFRDTRY. A helical membrane pass occupies residues 55-75; that stretch reads ILFAQTLFVDSALMLFADLTL. The Extracellular segment spans residues 76-91; the sequence is VGSAYELFIHIISCYI. Residues cysteine 89 and cysteine 170 are joined by a disulfide bond. The helical transmembrane segment at 92–112 threads the bilayer; sequence FCTVMALLSICSPVTLVAMCL. Residues 113–135 lie on the Cytoplasmic side of the membrane; it reads ERYVAICLPLRHASISSPKNTIN. A helical transmembrane segment spans residues 136–156; it reads GLLIIWGVSSVIPLFIFIVSF. Over 157–190 the chain is Extracellular; that stretch reads TYTPPNAMNSYVVCSNDVMFQVKWLAEMRALSQQ. A helical transmembrane segment spans residues 191-211; the sequence is LLFVIMLCIVGSTYIKIMVAA. The Cytoplasmic segment spans residues 212-227; it reads KSASAENKKSTYKGLR. The helical transmembrane segment at 228–248 threads the bilayer; the sequence is TVILHGLQLILGMMQLITPYI. The Extracellular segment spans residues 249-267; sequence DILTLKVDIMLFINVKFSN. Residues 268-285 traverse the membrane as a helical segment; sequence FMLFWIFPRCLSPLVYGL. The Cytoplasmic portion of the chain corresponds to 286 to 325; sequence RDKKFYNALKYYAFCGIYVCKKHKIKDSKTIRGAVSIAIY.

Belongs to the G-protein coupled receptor 1 family. In terms of assembly, homodimer. Monomer.

It localises to the cell membrane. The protein resides in the cytoplasm. In terms of biological role, probable olfactory receptor. This is Odorant receptor 131-2 from Danio rerio (Zebrafish).